The primary structure comprises 428 residues: Enolase (428 aa).

Gln-163 provides a ligand contact to (2R)-2-phosphoglycerate. Glu-205 serves as the catalytic Proton donor. The Mg(2+) site is built by Asp-242, Glu-285, and Asp-312. Positions 337, 366, 367, and 388 each coordinate (2R)-2-phosphoglycerate. The active-site Proton acceptor is the Lys-337.

It belongs to the enolase family. Mg(2+) is required as a cofactor.

The protein resides in the cytoplasm. Its subcellular location is the secreted. It is found in the cell surface. The catalysed reaction is (2R)-2-phosphoglycerate = phosphoenolpyruvate + H2O. It participates in carbohydrate degradation; glycolysis; pyruvate from D-glyceraldehyde 3-phosphate: step 4/5. Catalyzes the reversible conversion of 2-phosphoglycerate (2-PG) into phosphoenolpyruvate (PEP). It is essential for the degradation of carbohydrates via glycolysis. The polypeptide is Enolase (Persephonella marina (strain DSM 14350 / EX-H1)).